The following is a 218-amino-acid chain: Ribose-5-phosphate isomerase A (218 aa).

Residues 28 to 31 (SGST), 81 to 84 (DGAD), and 94 to 97 (KGKG) contribute to the substrate site. Catalysis depends on Glu103, which acts as the Proton acceptor. Lys121 is a binding site for substrate.

The protein belongs to the ribose 5-phosphate isomerase family. In terms of assembly, homodimer.

It carries out the reaction aldehydo-D-ribose 5-phosphate = D-ribulose 5-phosphate. It functions in the pathway carbohydrate degradation; pentose phosphate pathway; D-ribose 5-phosphate from D-ribulose 5-phosphate (non-oxidative stage): step 1/1. Catalyzes the reversible conversion of ribose-5-phosphate to ribulose 5-phosphate. In Wigglesworthia glossinidia brevipalpis, this protein is Ribose-5-phosphate isomerase A.